The primary structure comprises 254 residues: MLSGLVTALRTLTVLPVPGRDAERFSSSLYWFPVVGLVIGGIVVLFARAGMGAGWPELAAVLALLGGFILTRGLHADGLADLADGFFGGRNREAALRIMKDPNVGSFGSLALIGVMLFKWICLLELARAGAYGMIAAGVVLSRTAQVLLAARMPYARSEGGTATAFVEDAGWPHLLVASVSGVVLLFVLLDWQVVPSSILLFGSVVALFFVGWLSHRKIGGITGDVLGACSELVEIAVWFVAALWLKGLFSAIA.

7 consecutive transmembrane segments (helical) span residues 27–47 (SSLYWFPVVGLVIGGIVVLFA), 50–70 (GMGAGWPELAAVLALLGGFIL), 104–124 (VGSFGSLALIGVMLFKWICLL), 131–151 (AYGMIAAGVVLSRTAQVLLAA), 170–190 (AGWPHLLVASVSGVVLLFVLL), 194–214 (VVPSSILLFGSVVALFFVGWL), and 233–253 (LVEIAVWFVAALWLKGLFSAI).

This sequence belongs to the CobS family. It depends on Mg(2+) as a cofactor.

The protein localises to the cell inner membrane. The enzyme catalyses alpha-ribazole + adenosylcob(III)inamide-GDP = adenosylcob(III)alamin + GMP + H(+). The catalysed reaction is alpha-ribazole 5'-phosphate + adenosylcob(III)inamide-GDP = adenosylcob(III)alamin 5'-phosphate + GMP + H(+). It participates in cofactor biosynthesis; adenosylcobalamin biosynthesis; adenosylcobalamin from cob(II)yrinate a,c-diamide: step 7/7. Joins adenosylcobinamide-GDP and alpha-ribazole to generate adenosylcobalamin (Ado-cobalamin). Also synthesizes adenosylcobalamin 5'-phosphate from adenosylcobinamide-GDP and alpha-ribazole 5'-phosphate. The chain is Adenosylcobinamide-GDP ribazoletransferase from Chlorobaculum parvum (strain DSM 263 / NCIMB 8327) (Chlorobium vibrioforme subsp. thiosulfatophilum).